Reading from the N-terminus, the 103-residue chain is uncharacterized protein (103 aa).

Low complexity predominate over residues 38 to 51; that stretch reads TTTTSSTTSASTTS. Residues 38–70 form a disordered region; the sequence is TTTTSSTTSASTTSQPSFSLPTSCNSNSPQSNL. Residues 52-70 show a composition bias toward polar residues; the sequence is QPSFSLPTSCNSNSPQSNL.

This is an uncharacterized protein from Dictyostelium discoideum (Social amoeba).